Reading from the N-terminus, the 159-residue chain is Nanos homolog 3 (159 aa).

The interval 42 to 87 is disordered; that stretch reads QEMQSDADSDEQAAALLESPSGPIRSRDSPEQNTSPGGGKPKSSPA. The segment at 91-145 adopts a Nanos-type zinc-finger fold; that stretch reads FCSFCKHNGETEAVYTSHYLKNRDGDVMCPYLRQYKCPLCGATGAKAHTKRFCPM. Zn(2+)-binding residues include Cys-92, Cys-95, His-108, Cys-119, Cys-127, Cys-130, His-138, and Cys-143. 2 short sequence motifs (C2HC) span residues 92–119 and 127–143; these read CSFC…DVMC and CPLC…KRFC. The tract at residues 92-159 is interaction with mylpfa; it reads CSFCKHNGET…YCSVYAKSTW (68 aa).

The protein belongs to the nanos family. As to quaternary structure, interacts (via C-terminus) with myosin mylpfa/mylz2; the interaction negatively regulates mylpfa phosphorylation. In terms of tissue distribution, in the embryo, displays early ubiquitous expression before being restricted to primordial germ cells in a 3'-UTR-dependent manner. Expressed in early stage germ cells in larval and adult ovaries.

The protein localises to the cytoplasm. The protein resides in the perinuclear region. Its function is as follows. RNA-binding protein which binds to RNA with no sequence specificity. Probably represses translation of specific mRNAs. Essential for the development of primordial germ cells (PGCs) by ensuring their proper migration and survival but is not required for PGC specification. Also required to maintain oocyte production in the adult ovary. Negatively regulates phosphorylation of myosin mylpfa/mylz2. The sequence is that of Nanos homolog 3 from Danio rerio (Zebrafish).